Reading from the N-terminus, the 355-residue chain is MSASLLVRTACGGRAVAQRLRTVLWPITQTSVVAGLAWYLTHDVFNHPQAFFAPISAVVCMSATNVLRARRAQQMIVGVALGIVLGAGVHALLGSGPIAMGVVVFIALSVAVLCARGLVAQGLMFINQAAVSAVLVLVFASNGSVVFERLFDALVGGGLAIVFSILLFPPDPVVMLCSARADVLAAVRDILAELVNTVSDPTSAPPDWPMAAADRLHQQLNGLIEVRANAAMVARRAPRRWGVRSTVRDLDQQAVYLALLVSSVLHLARTIAGPGGDKLPTPVHAVLTDLAAGTGLADADPTAANEHAAAARATASTLQSAACGSNEVVRADIVQACVTDLQRVIERPGPSGMSA.

Helical transmembrane passes span 22–42 (TVLW…YLTH), 44–64 (VFNH…MSAT), 71–91 (RAQQ…GVHA), 92–112 (LLGS…SVAV), 119–139 (VAQG…VLVF), and 150–170 (LFDA…LFPP).

It localises to the cell membrane. In terms of biological role, may be involved in the import of arylamide compounds. This Mycobacterium bovis (strain ATCC BAA-935 / AF2122/97) protein is Putative arylamide transporter.